The primary structure comprises 93 residues: Small ribosomal subunit protein uS19 (93 aa).

Belongs to the universal ribosomal protein uS19 family.

Protein S19 forms a complex with S13 that binds strongly to the 16S ribosomal RNA. The sequence is that of Small ribosomal subunit protein uS19 from Geobacter sulfurreducens (strain ATCC 51573 / DSM 12127 / PCA).